A 517-amino-acid chain; its full sequence is Crotonobetaine/carnitine--CoA ligase (517 aa).

It belongs to the ATP-dependent AMP-binding enzyme family.

It catalyses the reaction 4-(trimethylamino)butanoate + ATP + CoA = 4-(trimethylamino)butanoyl-CoA + AMP + diphosphate. The catalysed reaction is crotonobetaine + ATP + CoA = crotonobetainyl-CoA + AMP + diphosphate. The enzyme catalyses (R)-carnitine + ATP + CoA = (R)-carnitinyl-CoA + AMP + diphosphate. It functions in the pathway amine and polyamine metabolism; carnitine metabolism. Catalyzes the transfer of CoA to carnitine, generating the initial carnitinyl-CoA needed for the CaiB reaction cycle. Also has activity toward crotonobetaine and gamma-butyrobetaine. The chain is Crotonobetaine/carnitine--CoA ligase from Escherichia coli (strain ATCC 8739 / DSM 1576 / NBRC 3972 / NCIMB 8545 / WDCM 00012 / Crooks).